The primary structure comprises 302 residues: Sulfate adenylyltransferase subunit 2 (302 aa).

The segment at 280–302 (RQGRAIDHDQSGSMELKKRQGYF) is disordered.

The protein belongs to the PAPS reductase family. CysD subfamily. Heterodimer composed of CysD, the smaller subunit, and CysN.

The catalysed reaction is sulfate + ATP + H(+) = adenosine 5'-phosphosulfate + diphosphate. It functions in the pathway sulfur metabolism; hydrogen sulfide biosynthesis; sulfite from sulfate: step 1/3. In terms of biological role, with CysN forms the ATP sulfurylase (ATPS) that catalyzes the adenylation of sulfate producing adenosine 5'-phosphosulfate (APS) and diphosphate, the first enzymatic step in sulfur assimilation pathway. APS synthesis involves the formation of a high-energy phosphoric-sulfuric acid anhydride bond driven by GTP hydrolysis by CysN coupled to ATP hydrolysis by CysD. This chain is Sulfate adenylyltransferase subunit 2, found in Vibrio vulnificus (strain CMCP6).